A 374-amino-acid polypeptide reads, in one-letter code: Nucleosome assembly protein 1;3 (374 aa).

Positions 26–80 (VNALKNKLQNLAGQHSDVLENLTPKIRRRVEVLREIQGKHDEIETKFREERAALE) form a coiled coil. Ser-41 carries the post-translational modification Phosphoserine. A Nuclear export signal motif is present at residues 47-62 (LTPKIRRRVEVLREIQ). The Nuclear localization signal motif lies at 222–227 (KKKPKK). Residues 299-339 (IEGEEFEIDNDDEDDIDEDEDEDEEDEDEDEEEDDEDEEEE) show a composition bias toward acidic residues. Residues 299-374 (IEGEEFEIDN…GERPPECKQQ (76 aa)) form a disordered region. The span at 343–355 (TKKKPSVLHKKGG) shows a compositional bias: basic residues. A compositionally biased stretch (basic and acidic residues) spans 364 to 374 (QGERPPECKQQ). A Cysteine methyl ester modification is found at Cys-371. A lipid anchor (S-farnesyl cysteine) is attached at Cys-371. The propeptide at 372-374 (KQQ) is removed in mature form.

This sequence belongs to the nucleosome assembly protein (NAP) family. In terms of assembly, can form homomeric and heteromeric protein complexes with NAP1;1, NAP1;2 and NAP1;4. Binds histone H2A and associates with chromatin in vivo. Ubiquitous.

Its subcellular location is the nucleus. The protein localises to the cytoplasm. Functionally, may modulate chromatin structure by regulation of nucleosome assembly/disassembly. May function in nucleotide excision repair (NER). Involved in somatic homologous recombination. Could be involved in response to abscisic acid (ABA) and to salt stress. This chain is Nucleosome assembly protein 1;3 (NAP1;3), found in Arabidopsis thaliana (Mouse-ear cress).